Consider the following 358-residue polypeptide: Dynein axonemal assembly factor 10 (358 aa).

WD repeat units follow at residues glutamate 64–tyrosine 106, asparagine 116–alanine 155, glutamate 163–glutamate 206, asparagine 208–glycine 250, alanine 258–arginine 298, and leucine 320–leucine 358.

Interacts with PIH1D1; the interaction associates DNAAF10 with the R2TP complex. Interacts with several dynein axonemal assembly factors.

The protein localises to the dynein axonemal particle. Functionally, key assembly factor specifically required for the stability of axonemal dynein heavy chains in cytoplasm. This is Dynein axonemal assembly factor 10 (dnaaf10) from Xenopus tropicalis (Western clawed frog).